Reading from the N-terminus, the 85-residue chain is Large ribosomal subunit protein bL31B (85 aa).

Belongs to the bacterial ribosomal protein bL31 family. Type B subfamily. As to quaternary structure, part of the 50S ribosomal subunit.

The polypeptide is Large ribosomal subunit protein bL31B (Porphyromonas gingivalis (strain ATCC 33277 / DSM 20709 / CIP 103683 / JCM 12257 / NCTC 11834 / 2561)).